The following is a 118-amino-acid chain: Large ribosomal subunit protein bL20 (118 aa).

Belongs to the bacterial ribosomal protein bL20 family.

Binds directly to 23S ribosomal RNA and is necessary for the in vitro assembly process of the 50S ribosomal subunit. It is not involved in the protein synthesizing functions of that subunit. This Hamiltonella defensa subsp. Acyrthosiphon pisum (strain 5AT) protein is Large ribosomal subunit protein bL20.